A 492-amino-acid polypeptide reads, in one-letter code: Regulatory protein ViaA (492 aa).

It belongs to the ViaA family. In terms of assembly, homodimer. Interacts with RavA.

The protein resides in the cytoplasm. In terms of biological role, component of the RavA-ViaA chaperone complex, which may act on the membrane to optimize the function of some of the respiratory chains. ViaA stimulates the ATPase activity of RavA. In Pectobacterium carotovorum subsp. carotovorum (strain PC1), this protein is Regulatory protein ViaA.